A 101-amino-acid chain; its full sequence is Small ribosomal subunit protein uS14 (101 aa).

The protein belongs to the universal ribosomal protein uS14 family. Part of the 30S ribosomal subunit. Contacts proteins S3 and S10.

Binds 16S rRNA, required for the assembly of 30S particles and may also be responsible for determining the conformation of the 16S rRNA at the A site. In Beijerinckia indica subsp. indica (strain ATCC 9039 / DSM 1715 / NCIMB 8712), this protein is Small ribosomal subunit protein uS14.